The sequence spans 192 residues: Nucleoside triphosphate pyrophosphatase (192 aa).

Asp-73 (proton acceptor) is an active-site residue.

The protein belongs to the Maf family. A divalent metal cation serves as cofactor.

It is found in the cytoplasm. It catalyses the reaction a ribonucleoside 5'-triphosphate + H2O = a ribonucleoside 5'-phosphate + diphosphate + H(+). The catalysed reaction is a 2'-deoxyribonucleoside 5'-triphosphate + H2O = a 2'-deoxyribonucleoside 5'-phosphate + diphosphate + H(+). Functionally, nucleoside triphosphate pyrophosphatase. May have a dual role in cell division arrest and in preventing the incorporation of modified nucleotides into cellular nucleic acids. The protein is Nucleoside triphosphate pyrophosphatase of Ehrlichia canis (strain Jake).